The following is a 185-amino-acid chain: Ribosome-recycling factor (185 aa).

It belongs to the RRF family.

The protein resides in the cytoplasm. In terms of biological role, responsible for the release of ribosomes from messenger RNA at the termination of protein biosynthesis. May increase the efficiency of translation by recycling ribosomes from one round of translation to another. This Streptococcus thermophilus (strain ATCC BAA-491 / LMD-9) protein is Ribosome-recycling factor.